The sequence spans 470 residues: Glucose-1-phosphate adenylyltransferase (470 aa).

Alpha-D-glucose 1-phosphate is bound by residues Gly164, 181–182 (EK), and Ser199.

The protein belongs to the bacterial/plant glucose-1-phosphate adenylyltransferase family. Homotetramer.

It carries out the reaction alpha-D-glucose 1-phosphate + ATP + H(+) = ADP-alpha-D-glucose + diphosphate. It participates in glycan biosynthesis; glycogen biosynthesis. Involved in the biosynthesis of ADP-glucose, a building block required for the elongation reactions to produce glycogen. Catalyzes the reaction between ATP and alpha-D-glucose 1-phosphate (G1P) to produce pyrophosphate and ADP-Glc. This is Glucose-1-phosphate adenylyltransferase from Pseudarthrobacter chlorophenolicus (strain ATCC 700700 / DSM 12829 / CIP 107037 / JCM 12360 / KCTC 9906 / NCIMB 13794 / A6) (Arthrobacter chlorophenolicus).